Here is a 303-residue protein sequence, read N- to C-terminus: Caspase-7 (303 aa).

Over residues 1-21 (MADDQGCIEEQGVEDSANEDS) the composition is skewed to acidic residues. The tract at residues 1-30 (MADDQGCIEEQGVEDSANEDSVDAKPDRSS) is disordered. At Ala-2 the chain carries N-acetylalanine. Positions 2–23 (ADDQGCIEEQGVEDSANEDSVD) are cleaved as a propeptide — N-terminally processed. At Ser-30 the chain carries Phosphoserine; by PAK2. At Ser-37 the chain carries Phosphoserine. The interval 38-41 (KKKK) is exosite. A loop L1 region spans residues 76-87 (KNFDKVTGMGVR). Residue His-144 is part of the active site. Residue Thr-173 is modified to Phosphothreonine; by PAK2. Cys-186 is an active-site residue. Residues 187 to 196 (RGTELDDGIQ) form a loop L2 region. A propeptide spanning residues 199–206 (SGPINDTD) is cleaved from the precursor. Residues 226–238 (VPGYYSWRSPGRG) form a loop L3 region. The residue at position 233 (Arg-233) is a (Microbial infection) ADP-riboxanated arginine. A Phosphoserine; by PAK2 modification is found at Ser-239. The tract at residues 274 to 288 (ESQSDDPHFHEKKQI) is loop L4.

The protein belongs to the peptidase C14A family. Heterotetramer that consists of two anti-parallel arranged heterodimers, each one formed by a 20 kDa (p20) and a 11 kDa (p11) subunit. Interacts with XIAP (via its second BIR domain); inhibiting CASP7 activity. Interacts with BIRC6/bruce. Interacts with ATXN3 (short isoform 1). Interacts with HSPA5. Cleavage by different proteases, such as granzyme B (GZMB), caspase-1 (CASP1), caspase-8 (CASP8), caspase-9 (CASP9) or caspase-10 (CASP10) generate the two active subunits. Its involvement in different programmed cell death processes is probably specified by the protease that activates CASP7. Cleaved and activated by initiator caspases (CASP8, CASP9 and/or CASP10), leading to execution phase of apoptosis. Cleavage and maturation by GZMB regulates granzyme-mediated programmed cell death. Cleaved and activated by CASP1 in response to bacterial infection. Propeptide domains can also be cleaved efficiently by CASP3. Active heterodimers between the small subunit of caspase-7 and the large subunit of CASP3, and vice versa, also occur. Also cleaved at the N-terminus at alternative sites by CAPN1, leading to its activation. In terms of processing, phosphorylation at Ser-30 and Ser-239 by PAK2 inhibits its activity. Phosphorylation at Ser-30 prevents cleavage and activation by initiator caspase CASP9, while phosphorylation at Ser-239 prevents thiol protease activity by preventing substrate-binding. Post-translationally, (Microbial infection) ADP-riboxanation by C.violaceum CopC blocks CASP7 processing, preventing CASP7 activation and ability to recognize and cleave substrates. Ubiquitinated by BIRC6; this activity is inhibited by DIABLO/SMAC. As to expression, highly expressed in lung, skeletal muscle, liver, kidney, spleen and heart, and moderately in testis. No expression in the brain.

The protein resides in the cytoplasm. It is found in the cytosol. It localises to the nucleus. The protein localises to the secreted. Its subcellular location is the extracellular space. The catalysed reaction is Strict requirement for an Asp residue at position P1 and has a preferred cleavage sequence of Asp-Glu-Val-Asp-|-.. With respect to regulation, during activation, the N-terminal disordered prodomain is removed by cleavage. Concomitantly, double cleavage gives rise to a large Caspase-7 subunit p20 and a small Caspase-7 subunit p11. The two large and two small subunits then assemble to form the active CASP7 complex. Can be cleaved and activated by different caspases, depending on the context. Cleaved and activated by initiator caspases (CASP8, CASP9 and/or CASP10), leading to execution phase of apoptosis. Inhibited by XIAP, which directly binds to the active site pocket and obstructs substrate entry. Cleavage and maturation by GZMB regulates granzyme-mediated programmed cell death. Cleavage and maturation by CASP1 regulates pyroptosis. Phosphorylation at Ser-30 and Ser-239 by PAK2 inhibits its activity. Inhibited by isatin sulfonamides. Inhibited by 2-(2,4-Dichlorophenoxy)- N-(2-mercapto-ethyl)-acetamide (DICA) and 5-Fluoro-1H-indole-2- carboxylic acid (2-mercapto-ethyl)-amide (FICA) allosteric inhibitors, which disrupt an interaction between Arg-187 and Tyr-223. Specifically inhibited by DARPin D7.18 and D7.43, which specifically bind to the precursor CASP7 and prevent its processing and activation. Inhibited by BIRC6; following inhibition of BIRC6-caspase binding by DIABLO/SMAC, BIRC6 is subjected to caspase cleavage, leading to an increase in active caspases. Thiol protease involved in different programmed cell death processes, such as apoptosis, pyroptosis or granzyme-mediated programmed cell death, by proteolytically cleaving target proteins. Has a marked preference for Asp-Glu-Val-Asp (DEVD) consensus sequences, with some plasticity for alternate non-canonical sequences. Its involvement in the different programmed cell death processes is probably determined by upstream proteases that activate CASP7. Acts as an effector caspase involved in the execution phase of apoptosis: following cleavage and activation by initiator caspases (CASP8, CASP9 and/or CASP10), mediates execution of apoptosis by catalyzing cleavage of proteins, such as CLSPN, PARP1, PTGES3 and YY1. Compared to CASP3, acts as a minor executioner caspase and cleaves a limited set of target proteins. Acts as a key regulator of the inflammatory response in response to bacterial infection by catalyzing cleavage and activation of the sphingomyelin phosphodiesterase SMPD1 in the extracellular milieu, thereby promoting membrane repair. Regulates pyroptosis in intestinal epithelial cells: cleaved and activated by CASP1 in response to S.typhimurium infection, promoting its secretion to the extracellular milieu, where it catalyzes activation of SMPD1, generating ceramides that repair membranes and counteract the action of gasdermin-D (GSDMD) pores. Regulates granzyme-mediated programmed cell death in hepatocytes: cleaved and activated by granzyme B (GZMB) in response to bacterial infection, promoting its secretion to the extracellular milieu, where it catalyzes activation of SMPD1, generating ceramides that repair membranes and counteract the action of perforin (PRF1) pores. Following cleavage by CASP1 in response to inflammasome activation, catalyzes processing and inactivation of PARP1, alleviating the transcription repressor activity of PARP1. Acts as an inhibitor of type I interferon production during virus-induced apoptosis by mediating cleavage of antiviral proteins CGAS, IRF3 and MAVS, thereby preventing cytokine overproduction. Cleaves and activates sterol regulatory element binding proteins (SREBPs). Cleaves phospholipid scramblase proteins XKR4, XKR8 and XKR9. In case of infection, catalyzes cleavage of Kaposi sarcoma-associated herpesvirus protein ORF57, thereby preventing expression of viral lytic genes. Cleaves BIRC6 following inhibition of BIRC6-caspase binding by DIABLO/SMAC. In terms of biological role, lacks enzymatic activity. The chain is Caspase-7 from Homo sapiens (Human).